A 476-amino-acid polypeptide reads, in one-letter code: Cardiolipin synthase (476 aa).

2 consecutive transmembrane segments (helical) span residues 2–22 (HLLI…IIFI) and 31–51 (WAWI…YILF). 2 consecutive PLD phosphodiesterase domains span residues 207–234 (INYR…GDEY) and 389–416 (EKGF…DIRS). Catalysis depends on residues histidine 212, lysine 214, aspartate 219, histidine 394, lysine 396, and aspartate 401.

Belongs to the phospholipase D family. Cardiolipin synthase subfamily.

The protein resides in the cell membrane. It carries out the reaction 2 a 1,2-diacyl-sn-glycero-3-phospho-(1'-sn-glycerol) = a cardiolipin + glycerol. Catalyzes the reversible phosphatidyl group transfer from one phosphatidylglycerol molecule to another to form cardiolipin (CL) (diphosphatidylglycerol) and glycerol. The protein is Cardiolipin synthase (cls) of Clostridium perfringens (strain SM101 / Type A).